A 659-amino-acid polypeptide reads, in one-letter code: Zeaxanthin epoxidase, chloroplastic (659 aa).

The N-terminal 50 residues, Met1–Ala50, are a transit peptide targeting the chloroplast. FAD is bound by residues Arg79–Glu107 and Thr357–Asp370. Residues Leu553–Gly607 enclose the FHA domain.

The cofactor is FAD. As to expression, expressed in young microspores.

The protein resides in the plastid. It is found in the chloroplast membrane. It localises to the chloroplast thylakoid membrane. The enzyme catalyses all-trans-zeaxanthin + 4 reduced [2Fe-2S]-[ferredoxin] + 2 O2 + 4 H(+) = all-trans-violaxanthin + 4 oxidized [2Fe-2S]-[ferredoxin] + 2 H2O. It participates in plant hormone biosynthesis; abscisate biosynthesis. Zeaxanthin epoxidase that plays an important role in the xanthophyll cycle and abscisic acid (ABA) biosynthesis. Converts zeaxanthin into antheraxanthin and subsequently violaxanthin. Required for resistance to osmotic and drought stresses, seed development and dormancy. The sequence is that of Zeaxanthin epoxidase, chloroplastic (ZEP) from Oryza sativa subsp. japonica (Rice).